Consider the following 307-residue polypeptide: F-box protein PP2-B7 (307 aa).

One can recognise an F-box domain in the interval 37 to 83 (PLSLGDLPEECISLIISFTSPRDACVFALVSKTFESAVQSDIVWEKF).

The polypeptide is F-box protein PP2-B7 (PP2B7) (Arabidopsis thaliana (Mouse-ear cress)).